Consider the following 356-residue polypeptide: Staphylococcal superantigen-like 3 (356 aa).

An N-terminal signal peptide occupies residues 1–30 (MKMRTIAKTSLALGLLTTGAITVTTQSVKA). Residues 61-165 (ATTQAANTRQ…TIKQAQTDMT (105 aa)) form a disordered region. Residues 69-104 (RQERTPKLEKAPNTNEEKTSASKIEKISQPKQEEQK) are compositionally biased toward basic and acidic residues. Residues 114–141 (PKQEQSQTTTESTTPKTKVTTPPSTNTP) are compositionally biased toward low complexity. Polar residues predominate over residues 142 to 164 (QPMQSTKSDTPQSPTIKQAQTDM). A sialyl Lewis X-binding region spans residues 228–326 (IDVFIVLEDN…VIKMKNGGKY (99 aa)).

Belongs to the staphylococcal/streptococcal toxin family. In terms of assembly, interacts with host TLR2 (via its extracellular domain).

The protein localises to the secreted. Secreted protein that plays an essential role in immune innate response inhibition by interacting with and inhibiting host TLR2. In turn, bacteria recognition by immune cells is impaired and cytokine production is inhibited. Mechanistically, by interacting with TLR2, blocks ligand binding and thus inhibits activation. Second, by interacting with an already formed TLR2-lipopeptide complex, prevents TLR heterodimerization and downstream signaling. The interaction with host TLR2 does not involve sialyl Lewis X interactions. The sequence is that of Staphylococcal superantigen-like 3 from Staphylococcus aureus (strain NCTC 8325 / PS 47).